The sequence spans 448 residues: ATP-dependent protease ATPase subunit HslU (448 aa).

ATP is bound by residues I18, 60–65 (GVGKTE), D261, E326, and R398.

Belongs to the ClpX chaperone family. HslU subfamily. A double ring-shaped homohexamer of HslV is capped on each side by a ring-shaped HslU homohexamer. The assembly of the HslU/HslV complex is dependent on binding of ATP.

Its subcellular location is the cytoplasm. Functionally, ATPase subunit of a proteasome-like degradation complex; this subunit has chaperone activity. The binding of ATP and its subsequent hydrolysis by HslU are essential for unfolding of protein substrates subsequently hydrolyzed by HslV. HslU recognizes the N-terminal part of its protein substrates and unfolds these before they are guided to HslV for hydrolysis. In Paraburkholderia phytofirmans (strain DSM 17436 / LMG 22146 / PsJN) (Burkholderia phytofirmans), this protein is ATP-dependent protease ATPase subunit HslU.